The chain runs to 51 residues: Insulin (51 aa).

3 disulfide bridges follow: Cys7–Cys37, Cys19–Cys50, and Cys36–Cys41.

The protein belongs to the insulin family. Heterodimer of a B chain and an A chain linked by two disulfide bonds.

It localises to the secreted. Its function is as follows. Insulin decreases blood glucose concentration. It increases cell permeability to monosaccharides, amino acids and fatty acids. It accelerates glycolysis, the pentose phosphate cycle, and glycogen synthesis in liver. The chain is Insulin (INS) from Saimiri sciureus (Common squirrel monkey).